The primary structure comprises 411 residues: MASLAQQLAGGLRCPPLSNSNLSKPFSPKHTLKPRFSPIVSAVAVSNAQTRERQKLKQLFEDAYERCRNAPMEGVSFTIDDFHTALDKYDFNSEMGSRVKGTVFCTDANGALVDITAKSSAYLPLAEACIYRIKNVEEAGIIPGVREEFVIIGENEADDSLILSLRQIQYELAWERCRQLQAEDVVVKGKIVGANKGGVVALVEGLRGFVPFSQISSKSSAEELLEKEIPLKFVEVDEEQSRLVMSNRKAMADSQAQLGIGSVVTGTVQSLKPYGAFIDIGGINGLLHVSQISHDRVSDIATVLQPGDTLKVMILSHDRERGRVSLSTKKLEPTPGDMIRNPKLVFEKAEEMAQTFRQRIAQAEAMARADMLRFQPESGLTLSSDGILGPLTSDLPAEGLDLSVVPPAVES.

Residues 1–41 constitute a chloroplast transit peptide; that stretch reads MASLAQQLAGGLRCPPLSNSNLSKPFSPKHTLKPRFSPIVS. S1 motif domains follow at residues 96–166, 184–248, and 261–329; these read GSRV…LSLR, DVVV…MSNR, and GSVV…LSTK.

The protein belongs to the bacterial ribosomal protein bS1 family. As to quaternary structure, component of the chloroplast small ribosomal subunit (SSU). Mature 70S chloroplast ribosomes of higher plants consist of a small (30S) and a large (50S) subunit. The 30S small subunit contains 1 molecule of ribosomal RNA (16S rRNA) and 24 different proteins. The 50S large subunit contains 3 rRNA molecules (23S, 5S and 4.5S rRNA) and 33 different proteins.

It localises to the plastid. The protein resides in the chloroplast. In terms of biological role, component of the chloroplast ribosome (chloro-ribosome), a dedicated translation machinery responsible for the synthesis of chloroplast genome-encoded proteins, including proteins of the transcription and translation machinery and components of the photosynthetic apparatus. Actively engaged in the initiation complex formation via a strong mRNA-binding activity. Possesses a poly(A)-binding activity which might play a role as a control element in chloroplast mRNA translation. The polypeptide is Small ribosomal subunit protein bS1c (RPS1) (Spinacia oleracea (Spinach)).